Reading from the N-terminus, the 1046-residue chain is Inner tegument protein (1046 aa).

Residues 543–1046 (WGIVPPDESN…TGRRANGDNA (504 aa)) are interaction with large tegument protein.

Belongs to the herpesviridae inner tegument protein family. In terms of assembly, interacts (via C-terminus) with the large tegument protein/LTP (via N-terminus).

The protein resides in the virion tegument. Its subcellular location is the host cytoplasm. The protein localises to the host nucleus. It is found in the host Golgi apparatus. It localises to the host trans-Golgi network. Plays an essential role in cytoplasmic secondary envelopment during viral egress. Interacts with the capsid via the large tegument protein/LTP and participates in its transport to the host trans-Golgi network (TGN) where secondary envelopment occurs. Modulates tegumentation and capsid accumulation at the viral assembly complex. The polypeptide is Inner tegument protein (MDV050) (Gallid herpesvirus 2 (strain Chicken/Md5/ATCC VR-987) (GaHV-2)).